Here is a 145-residue protein sequence, read N- to C-terminus: Brain and acute leukemia cytoplasmic protein (145 aa).

The N-myristoyl glycine moiety is linked to residue G2. C3 is lipidated: S-palmitoyl cysteine. An interaction with CAMK2A region spans residues 3 to 35; sequence CGGSRADAIEPRYYESWTRETESTWLTYTDSDA. Positions 27-119 are disordered; that stretch reads WLTYTDSDAP…AKRDAKRMPA (93 aa). Residues 32–46 are compositionally biased toward low complexity; sequence DSDAPPSAAAPDSGP. The segment covering 83–108 has biased composition (polar residues); that stretch reads CETQCPNPQSLSSGPLTQKQNGLQTT. Positions 109–119 are enriched in basic and acidic residues; that stretch reads EAKRDAKRMPA.

In terms of assembly, interacts with CAMK2A. In terms of processing, palmitoylation and myristoylation target the protein to the lipid rafts. Predominantly expressed in neuroectoderm-derived tissues. Expressed in the brain and spinal cord, and at low levels, in the adrenal gland. In the bone marrow, confined to the CD34+ progenitor cells. Not found in peripheral blood mononuclear cells, nor lymph nodes. Tends to be expressed at high levels in acute myeloid leukemia and glioblastoma cells.

The protein localises to the cytoplasm. It is found in the synapse. It localises to the synaptosome. Its subcellular location is the membrane raft. The protein resides in the postsynaptic density. Functionally, may play a synaptic role at the postsynaptic lipid rafts possibly through interaction with CAMK2A. The protein is Brain and acute leukemia cytoplasmic protein of Homo sapiens (Human).